The primary structure comprises 451 residues: Glucose-6-phosphate isomerase (451 aa).

Phosphothreonine is present on Thr-38. Glu-290 functions as the Proton donor in the catalytic mechanism. Residues His-311 and Lys-425 contribute to the active site.

It belongs to the GPI family.

Its subcellular location is the cytoplasm. It catalyses the reaction alpha-D-glucose 6-phosphate = beta-D-fructose 6-phosphate. The protein operates within carbohydrate biosynthesis; gluconeogenesis. It functions in the pathway carbohydrate degradation; glycolysis; D-glyceraldehyde 3-phosphate and glycerone phosphate from D-glucose: step 2/4. In terms of biological role, catalyzes the reversible isomerization of glucose-6-phosphate to fructose-6-phosphate. This Shouchella clausii (strain KSM-K16) (Alkalihalobacillus clausii) protein is Glucose-6-phosphate isomerase.